Reading from the N-terminus, the 158-residue chain is Low molecular weight phosphotyrosine protein phosphatase (158 aa).

A2 carries the N-acetylalanine modification. C13 serves as the catalytic Nucleophile. R19 is a catalytic residue. D130 acts as the Proton donor in catalysis. A phosphotyrosine mark is found at Y132 and Y133.

The protein belongs to the low molecular weight phosphotyrosine protein phosphatase family. As to quaternary structure, interacts with EPHA2; dephosphorylates EPHA2. Interacts with EPHB1. Interacts with the SH3 domain of SPTAN1. In terms of processing, phosphorylated by LCK. Phosphorylation at Tyr-132 increases its phosphatase activity.

The protein localises to the cytoplasm. It catalyses the reaction O-phospho-L-tyrosyl-[protein] + H2O = L-tyrosyl-[protein] + phosphate. The catalysed reaction is a phosphate monoester + H2O = an alcohol + phosphate. Inhibited by sulfhydryl reagents. Acts on tyrosine phosphorylated proteins, low-MW aryl phosphates and natural and synthetic acyl phosphates with differences in substrate specificity between isoform 1 and isoform 2. The sequence is that of Low molecular weight phosphotyrosine protein phosphatase (ACP1) from Sus scrofa (Pig).